Here is a 187-residue protein sequence, read N- to C-terminus: Large ribosomal subunit protein uL5 (187 aa).

It belongs to the universal ribosomal protein uL5 family. In terms of assembly, part of the 50S ribosomal subunit; part of the 5S rRNA/L5/L18/L25 subcomplex. Contacts the 5S rRNA and the P site tRNA. Forms a bridge to the 30S subunit in the 70S ribosome.

Functionally, this is one of the proteins that bind and probably mediate the attachment of the 5S RNA into the large ribosomal subunit, where it forms part of the central protuberance. In the 70S ribosome it contacts protein S13 of the 30S subunit (bridge B1b), connecting the 2 subunits; this bridge is implicated in subunit movement. Contacts the P site tRNA; the 5S rRNA and some of its associated proteins might help stabilize positioning of ribosome-bound tRNAs. The chain is Large ribosomal subunit protein uL5 from Mycobacterium bovis (strain ATCC BAA-935 / AF2122/97).